The following is a 460-amino-acid chain: Probable protein phosphatase 2C 38 (460 aa).

2 disordered regions span residues 1–30 (MVAV…AVPS) and 83–111 (RPMR…GRIA). Basic and acidic residues predominate over residues 100–109 (PRDREPRDGR). A PPM-type phosphatase domain is found at 118–432 (AASLYTMRGN…DDCAVVCLFL (315 aa)). Mn(2+) contacts are provided by Asp154 and Gly155. The segment at 192-219 (VTSSMTEGGGTERMDRDTETPLGTEENG) is disordered. Residues 201-210 (GTERMDRDTE) show a composition bias toward basic and acidic residues. Mn(2+) is bound by residues Asp377 and Asp423.

This sequence belongs to the PP2C family. Requires Mg(2+) as cofactor. It depends on Mn(2+) as a cofactor.

It catalyses the reaction O-phospho-L-seryl-[protein] + H2O = L-seryl-[protein] + phosphate. The enzyme catalyses O-phospho-L-threonyl-[protein] + H2O = L-threonyl-[protein] + phosphate. The polypeptide is Probable protein phosphatase 2C 38 (Oryza sativa subsp. japonica (Rice)).